Reading from the N-terminus, the 245-residue chain is Acetylglutamate kinase (245 aa).

Substrate-binding positions include 41-42 (GG), R63, and N156.

It belongs to the acetylglutamate kinase family. ArgB subfamily.

The protein localises to the cytoplasm. The catalysed reaction is N-acetyl-L-glutamate + ATP = N-acetyl-L-glutamyl 5-phosphate + ADP. It participates in amino-acid biosynthesis; L-arginine biosynthesis; N(2)-acetyl-L-ornithine from L-glutamate: step 2/4. Its function is as follows. Catalyzes the ATP-dependent phosphorylation of N-acetyl-L-glutamate. In Staphylococcus epidermidis (strain ATCC 35984 / DSM 28319 / BCRC 17069 / CCUG 31568 / BM 3577 / RP62A), this protein is Acetylglutamate kinase.